The following is an 859-amino-acid chain: Glucans biosynthesis glucosyltransferase H (859 aa).

The next 6 helical transmembrane spans lie at 144 to 166 (YILL…GILP), 200 to 222 (LLLF…MGFL), 523 to 545 (VMSY…LLAV), 573 to 595 (VALF…ILIW), 608 to 630 (VTVS…MLFH), and 684 to 706 (SFLW…SVIS).

The protein belongs to the glycosyltransferase 2 family. OpgH subfamily.

It is found in the cell inner membrane. It functions in the pathway glycan metabolism; osmoregulated periplasmic glucan (OPG) biosynthesis. Involved in the biosynthesis of osmoregulated periplasmic glucans (OPGs). This is Glucans biosynthesis glucosyltransferase H from Pseudomonas syringae pv. tomato (strain ATCC BAA-871 / DC3000).